Reading from the N-terminus, the 208-residue chain is ATP-dependent Clp protease proteolytic subunit (208 aa).

Catalysis depends on S98, which acts as the Nucleophile. The active site involves H123.

Belongs to the peptidase S14 family. Fourteen ClpP subunits assemble into 2 heptameric rings which stack back to back to give a disk-like structure with a central cavity, resembling the structure of eukaryotic proteasomes.

It localises to the cytoplasm. The enzyme catalyses Hydrolysis of proteins to small peptides in the presence of ATP and magnesium. alpha-casein is the usual test substrate. In the absence of ATP, only oligopeptides shorter than five residues are hydrolyzed (such as succinyl-Leu-Tyr-|-NHMec, and Leu-Tyr-Leu-|-Tyr-Trp, in which cleavage of the -Tyr-|-Leu- and -Tyr-|-Trp bonds also occurs).. In terms of biological role, cleaves peptides in various proteins in a process that requires ATP hydrolysis. Has a chymotrypsin-like activity. Plays a major role in the degradation of misfolded proteins. This is ATP-dependent Clp protease proteolytic subunit from Wolbachia sp. subsp. Brugia malayi (strain TRS).